The primary structure comprises 327 residues: L-lactate dehydrogenase (327 aa).

NAD(+) is bound by residues V18, D39, R44, Y69, and G83–L84. Substrate-binding positions include Q86, R92, and N124–D127. NAD(+) contacts are provided by residues A122 to N124 and S147. D152–R155 contacts substrate. Residues R157 and H172 each coordinate beta-D-fructose 1,6-bisphosphate. The active-site Proton acceptor is H179. Position 224 is a phosphotyrosine (Y224). T233 is a binding site for substrate.

This sequence belongs to the LDH/MDH superfamily. LDH family. As to quaternary structure, homotetramer.

It localises to the cytoplasm. The enzyme catalyses (S)-lactate + NAD(+) = pyruvate + NADH + H(+). The protein operates within fermentation; pyruvate fermentation to lactate; (S)-lactate from pyruvate: step 1/1. Its activity is regulated as follows. Allosterically activated by fructose 1,6-bisphosphate (FBP). In terms of biological role, catalyzes the conversion of lactate to pyruvate. The chain is L-lactate dehydrogenase from Streptococcus suis (strain 98HAH33).